We begin with the raw amino-acid sequence, 262 residues long: Ribosomal RNA small subunit methyltransferase A (262 aa).

S-adenosyl-L-methionine-binding residues include Asn-14, Leu-16, Gly-41, Glu-63, Asp-85, and Asn-105.

The protein belongs to the class I-like SAM-binding methyltransferase superfamily. rRNA adenine N(6)-methyltransferase family. RsmA subfamily.

Its subcellular location is the cytoplasm. It catalyses the reaction adenosine(1518)/adenosine(1519) in 16S rRNA + 4 S-adenosyl-L-methionine = N(6)-dimethyladenosine(1518)/N(6)-dimethyladenosine(1519) in 16S rRNA + 4 S-adenosyl-L-homocysteine + 4 H(+). Its function is as follows. Specifically dimethylates two adjacent adenosines (A1518 and A1519) in the loop of a conserved hairpin near the 3'-end of 16S rRNA in the 30S particle. May play a critical role in biogenesis of 30S subunits. This Maridesulfovibrio salexigens (strain ATCC 14822 / DSM 2638 / NCIMB 8403 / VKM B-1763) (Desulfovibrio salexigens) protein is Ribosomal RNA small subunit methyltransferase A.